A 229-amino-acid chain; its full sequence is uncharacterized protein (229 aa).

The S4 RNA-binding domain maps to 2–69 (QRLAKIISNA…KPRLWIYYKP (68 aa)). Asp102 functions as the Nucleophile in the catalytic mechanism.

It belongs to the pseudouridine synthase RsuA family.

It carries out the reaction a uridine in RNA = a pseudouridine in RNA. This is an uncharacterized protein from Rickettsia felis (strain ATCC VR-1525 / URRWXCal2) (Rickettsia azadi).